Here is a 197-residue protein sequence, read N- to C-terminus: MKVLQEKILNEGKVLSGDVLKVDAFLNHQIDPVLMQEIGKEFAKRFKEENITKIVTIESSGIAPAVMAALELGVKVIFARKRKSLTLQDNMYVASVYSFTKQETNEISLSRNHIDESDRVLIIDDFLANGQAALGLMSLVEQAGASIAGIGIVIEKAFQDGGKKLREQGIRVESLAEIASLDNNAVTFVQQETAEVK.

Residues Leu20 and Asn27 each coordinate xanthine. Residue 128–132 coordinates 5-phospho-alpha-D-ribose 1-diphosphate; sequence ANGQA. Lys156 contributes to the xanthine binding site.

The protein belongs to the purine/pyrimidine phosphoribosyltransferase family. Xpt subfamily. In terms of assembly, homodimer.

The protein resides in the cytoplasm. The catalysed reaction is XMP + diphosphate = xanthine + 5-phospho-alpha-D-ribose 1-diphosphate. Its pathway is purine metabolism; XMP biosynthesis via salvage pathway; XMP from xanthine: step 1/1. Its function is as follows. Converts the preformed base xanthine, a product of nucleic acid breakdown, to xanthosine 5'-monophosphate (XMP), so it can be reused for RNA or DNA synthesis. The sequence is that of Xanthine phosphoribosyltransferase from Bacillus cereus (strain ZK / E33L).